Consider the following 80-residue polypeptide: Small ribosomal subunit protein bS16 (80 aa).

The protein belongs to the bacterial ribosomal protein bS16 family.

This chain is Small ribosomal subunit protein bS16, found in Laribacter hongkongensis (strain HLHK9).